The following is a 101-amino-acid chain: NAD(P)H-quinone oxidoreductase subunit 4L, chloroplastic (101 aa).

Helical transmembrane passes span 2-22 (MLEHVLVLSAYLFSFVLYGLI), 32-52 (MCLELILNAVNLNFVTFSDFF), and 61-81 (IFSIFVIAIAAAEAAIGLAIV).

The protein belongs to the complex I subunit 4L family. As to quaternary structure, NDH is composed of at least 16 different subunits, 5 of which are encoded in the nucleus.

It is found in the plastid. Its subcellular location is the chloroplast thylakoid membrane. It catalyses the reaction a plastoquinone + NADH + (n+1) H(+)(in) = a plastoquinol + NAD(+) + n H(+)(out). It carries out the reaction a plastoquinone + NADPH + (n+1) H(+)(in) = a plastoquinol + NADP(+) + n H(+)(out). In terms of biological role, NDH shuttles electrons from NAD(P)H:plastoquinone, via FMN and iron-sulfur (Fe-S) centers, to quinones in the photosynthetic chain and possibly in a chloroplast respiratory chain. The immediate electron acceptor for the enzyme in this species is believed to be plastoquinone. Couples the redox reaction to proton translocation, and thus conserves the redox energy in a proton gradient. The sequence is that of NAD(P)H-quinone oxidoreductase subunit 4L, chloroplastic from Guizotia abyssinica (Niger).